We begin with the raw amino-acid sequence, 153 residues long: Ribosome maturation factor RimP (153 aa).

Belongs to the RimP family.

The protein resides in the cytoplasm. Required for maturation of 30S ribosomal subunits. The chain is Ribosome maturation factor RimP from Coxiella burnetii (strain Dugway 5J108-111).